Reading from the N-terminus, the 342-residue chain is MVLSKPTVSSKPIVFSGAQPSGELTIGNYMGALRQWVQMQDDYDCIYCIVDLHAITARQDPALLRKRTLDTLALYLACGIDPKKSTIFVQSHVPEHSQLSWALNCYTYFGELSRMTQFKDKSARYAENINAGLFDYPVLMAADILLYQTNQVPVGEDQKQHLELSRDIASRFNNLYGDIFKIPEPFIPKAGARVMSLQDPTKKMSKSDDNRNNVIELLEDPKSVVKKIKRAMTDSDEPALIRYDVEKKAGVSNLLDILSGVTGQSIPELEAQFTGQMYGHLKGAVADAVSGMLSELQERYRTYREDEALLQDVMREGAAKARARAQVTLAKVYEAIGFVAQP.

ATP contacts are provided by residues 19 to 21 and 27 to 28; these read QPS and GN. The 'HIGH' region motif lies at 20–28; it reads PSGELTIGN. L-tryptophan is bound at residue Asp-143. ATP contacts are provided by residues 155-157, Val-194, and 203-207; these read GED and KMSKS. The short motif at 203-207 is the 'KMSKS' region element; it reads KMSKS.

The protein belongs to the class-I aminoacyl-tRNA synthetase family. In terms of assembly, homodimer.

Its subcellular location is the cytoplasm. It carries out the reaction tRNA(Trp) + L-tryptophan + ATP = L-tryptophyl-tRNA(Trp) + AMP + diphosphate + H(+). Its function is as follows. Catalyzes the attachment of tryptophan to tRNA(Trp). The protein is Tryptophan--tRNA ligase of Yersinia pestis.